Consider the following 310-residue polypeptide: Porphobilinogen deaminase (310 aa).

An S-(dipyrrolylmethanemethyl)cysteine modification is found at Cys-242.

The protein belongs to the HMBS family. As to quaternary structure, monomer. The cofactor is dipyrromethane.

It carries out the reaction 4 porphobilinogen + H2O = hydroxymethylbilane + 4 NH4(+). Its pathway is porphyrin-containing compound metabolism; protoporphyrin-IX biosynthesis; coproporphyrinogen-III from 5-aminolevulinate: step 2/4. In terms of biological role, tetrapolymerization of the monopyrrole PBG into the hydroxymethylbilane pre-uroporphyrinogen in several discrete steps. This chain is Porphobilinogen deaminase, found in Shewanella sp. (strain ANA-3).